The sequence spans 217 residues: Probable transaldolase (217 aa).

Catalysis depends on lysine 83, which acts as the Schiff-base intermediate with substrate.

It belongs to the transaldolase family. Type 3B subfamily.

It is found in the cytoplasm. The catalysed reaction is D-sedoheptulose 7-phosphate + D-glyceraldehyde 3-phosphate = D-erythrose 4-phosphate + beta-D-fructose 6-phosphate. It participates in carbohydrate degradation; pentose phosphate pathway; D-glyceraldehyde 3-phosphate and beta-D-fructose 6-phosphate from D-ribose 5-phosphate and D-xylulose 5-phosphate (non-oxidative stage): step 2/3. Transaldolase is important for the balance of metabolites in the pentose-phosphate pathway. The polypeptide is Probable transaldolase (Paracoccus denitrificans (strain Pd 1222)).